Here is a 649-residue protein sequence, read N- to C-terminus: Leucine-rich repeat transmembrane protein FLRT3 (649 aa).

The first 28 residues, 1–28, serve as a signal peptide directing secretion; sequence MISPAWSIFLIGTKIGLFLQVAPLSVMA. Residues 29–58 form the LRRNT domain; it reads KSCPSVCRCDAGFIYCNDRFLTSIPTGIPE. At 29-528 the chain is on the extracellular side; sequence KSCPSVCRCD…KEPYKNPNLP (500 aa). Intrachain disulfides connect C31–C37 and C35–C44. The interval 38–67 is interaction with ADGRL3; that stretch reads DAGFIYCNDRFLTSIPTGIPEDATTLYLQN. LRR repeat units lie at residues 59 to 80, 84 to 104, 105 to 126, 129 to 150, 155 to 176, 177 to 197, 200 to 220, 226 to 247, 248 to 269, and 272 to 293; these read DATT…SDLK, KVER…NLPK, YVKE…SLSK, YLEE…EGAF, YLRL…LPRT, IEEL…SLQG, SLKR…GDKV, NLTE…LPGT, NLRK…AFSY, and QLYR…IFDD. N-linked (GlcNAc...) asparagine glycosylation is present at N226. N-linked (GlcNAc...) asparagine glycosylation is found at N282 and N296. The LRRCT domain occupies 305 to 357; sequence NPWYCGCKMKWVRDWLQSLPVKVNVRGLMCQAPEKVRGMAIKDLNAELFDCKD. Residues C309 and C334 are joined by a disulfide bond. The segment at 385 to 407 is disordered; it reads VTKQPDIKNPKLTKDHQTTGSPS. Basic and acidic residues predominate over residues 389 to 401; sequence PDIKNPKLTKDHQ. Positions 409 to 504 constitute a Fibronectin type-III domain; the sequence is KTITITVKSV…VCIETETAPL (96 aa). Residues 529–549 form a helical membrane-spanning segment; sequence LAAIIGGAVALVTIALLALVC. Residues 550–649 lie on the Cytoplasmic side of the membrane; the sequence is WYVHRNGSLF…GIPDSDHSHS (100 aa). The disordered stretch occupies residues 622–649; that stretch reads LYKNNHSESSSNRSYRDSGIPDSDHSHS.

Monomer and homodimer. Self-associates (via leucine-rich repeats), giving rise to homooligomers. Interacts with FGFR1. Interacts (via extracellular domain) with ADGRL1/LPHN1 and LPHN2 (via olfactomedin-like domain). Interacts (via extracellular domain) with ADGRL3 (via olfactomedin-like domain); the interaction is direct. Interacts (via extracellular domain) with UNC5B and UNC5D (via extracellular domain); the interaction is direct. Identified in complexes composed of FLRT3, ADGRL3 and UNC5B, respectively FLRT3, ADGRL3 and UNC5D. May also interact (via extracellular domain) with UNC5A and UNC5C. Interacts (via cytoplasmic domain) with ROBO1. Post-translationally, N-glycosylated. In terms of processing, proteolytic cleavage in the juxtamembrane region gives rise to a soluble ectodomain. Cleavage is probably effected by a metalloprotease.

Its subcellular location is the cell membrane. The protein localises to the presynaptic cell membrane. It localises to the endoplasmic reticulum membrane. The protein resides in the cell junction. It is found in the focal adhesion. Its subcellular location is the secreted. The protein localises to the cell projection. It localises to the axon. The protein resides in the growth cone membrane. Functionally, functions in cell-cell adhesion, cell migration and axon guidance, exerting an attractive or repulsive role depending on its interaction partners. Plays a role in the spatial organization of brain neurons. Plays a role in vascular development in the retina. Plays a role in cell-cell adhesion via its interaction with ADGRL3 and probably also other latrophilins that are expressed at the surface of adjacent cells. Interaction with the intracellular domain of ROBO1 mediates axon attraction towards cells expressing NTN1. Mediates axon growth cone collapse and plays a repulsive role in neuron guidance via its interaction with UNC5B, and possibly also other UNC-5 family members. Promotes neurite outgrowth (in vitro). Mediates cell-cell contacts that promote an increase both in neurite number and in neurite length. Plays a role in the regulation of the density of glutamaergic synapses. Plays a role in fibroblast growth factor-mediated signaling cascades. Required for normal morphogenesis during embryonic development, but not for normal embryonic patterning. Required for normal ventral closure, headfold fusion and definitive endoderm migration during embryonic development. Required for the formation of a normal basement membrane and the maintenance of a normal anterior visceral endoderm during embryonic development. The polypeptide is Leucine-rich repeat transmembrane protein FLRT3 (FLRT3) (Pongo abelii (Sumatran orangutan)).